The primary structure comprises 88 residues: Large ribosomal subunit protein bL31B (88 aa).

Belongs to the bacterial ribosomal protein bL31 family. Type B subfamily. Part of the 50S ribosomal subunit.

The chain is Large ribosomal subunit protein bL31B from Paraburkholderia xenovorans (strain LB400).